A 137-amino-acid chain; its full sequence is ATP synthase epsilon chain, chloroplastic (137 aa).

The protein belongs to the ATPase epsilon chain family. As to quaternary structure, F-type ATPases have 2 components, CF(1) - the catalytic core - and CF(0) - the membrane proton channel. CF(1) has five subunits: alpha(3), beta(3), gamma(1), delta(1), epsilon(1). CF(0) has three main subunits: a, b and c.

The protein resides in the plastid. The protein localises to the chloroplast thylakoid membrane. Functionally, produces ATP from ADP in the presence of a proton gradient across the membrane. This is ATP synthase epsilon chain, chloroplastic from Bigelowiella natans (Pedinomonas minutissima).